We begin with the raw amino-acid sequence, 962 residues long: Leucine--tRNA ligase (962 aa).

Positions 40 to 51 (PYPSGAGLHVGH) match the 'HIGH' region motif. The disordered stretch occupies residues 548 to 570 (SRKLSGQHDEPNSNVTPSAVEGS). The 'KMSKS' region signature appears at 737-741 (KMSKS). Residue Lys-740 participates in ATP binding.

Belongs to the class-I aminoacyl-tRNA synthetase family.

Its subcellular location is the cytoplasm. The enzyme catalyses tRNA(Leu) + L-leucine + ATP = L-leucyl-tRNA(Leu) + AMP + diphosphate. The sequence is that of Leucine--tRNA ligase from Christiangramia forsetii (strain DSM 17595 / CGMCC 1.15422 / KT0803) (Gramella forsetii).